We begin with the raw amino-acid sequence, 251 residues long: Probable transcriptional regulatory protein DehaBAV1_0421 (251 aa).

Belongs to the TACO1 family.

It is found in the cytoplasm. The chain is Probable transcriptional regulatory protein DehaBAV1_0421 from Dehalococcoides mccartyi (strain ATCC BAA-2100 / JCM 16839 / KCTC 5957 / BAV1).